Consider the following 405-residue polypeptide: Serine/threonine transporter SstT (405 aa).

The next 8 helical transmembrane spans lie at 13 to 33 (GGSLVLQIFVGIIAGVALAGF), 43 to 63 (FLGDLFVGALKAIAPVLVFVL), 82 to 102 (IILLYLVGTFAAALTAVLMSF), 141 to 161 (ALINANYIGLLAWGVGLGIAL), 185 to 205 (FVICLAPIGIFGLVAATIAQT), 217 to 237 (LGVLLGAMAVIAFVVNPLIVF), 298 to 318 (MAGAAITITVLTLAAVHTLGI), and 339 to 359 (ASGVAGGSLLLIPLACSLFGI).

This sequence belongs to the dicarboxylate/amino acid:cation symporter (DAACS) (TC 2.A.23) family.

The protein localises to the cell inner membrane. It carries out the reaction L-serine(in) + Na(+)(in) = L-serine(out) + Na(+)(out). It catalyses the reaction L-threonine(in) + Na(+)(in) = L-threonine(out) + Na(+)(out). Involved in the import of serine and threonine into the cell, with the concomitant import of sodium (symport system). The chain is Serine/threonine transporter SstT from Shewanella amazonensis (strain ATCC BAA-1098 / SB2B).